A 153-amino-acid chain; its full sequence is Endoribonuclease YbeY (153 aa).

Residues His118, His122, and His128 each contribute to the Zn(2+) site.

It belongs to the endoribonuclease YbeY family. Requires Zn(2+) as cofactor.

The protein resides in the cytoplasm. In terms of biological role, single strand-specific metallo-endoribonuclease involved in late-stage 70S ribosome quality control and in maturation of the 3' terminus of the 16S rRNA. This chain is Endoribonuclease YbeY, found in Staphylococcus saprophyticus subsp. saprophyticus (strain ATCC 15305 / DSM 20229 / NCIMB 8711 / NCTC 7292 / S-41).